The primary structure comprises 78 residues: MASLIQVRDLLALRGRMEATQISQTLNTPQPMINAMLQQLESMGKAVRIQEEPDGCLSGSCKSCPEGKACLREWWALR.

Residues cysteine 56, cysteine 61, cysteine 64, and cysteine 70 each contribute to the iron-sulfur cluster site.

The protein belongs to the FeoC family.

Its function is as follows. May function as a transcriptional regulator that controls feoABC expression. This chain is Probable [Fe-S]-dependent transcriptional repressor, found in Escherichia coli O9:H4 (strain HS).